Reading from the N-terminus, the 207-residue chain is Cytochrome c biogenesis ATP-binding export protein CcmA 1 (207 aa).

An ABC transporter domain is found at 6–207; that stretch reads LEALDLAGVR…KTSQTVRMGA (202 aa). ATP is bound at residue 38-45; that stretch reads GENGSGKT.

Belongs to the ABC transporter superfamily. CcmA exporter (TC 3.A.1.107) family. As to quaternary structure, the complex is composed of two ATP-binding proteins (CcmA) and two transmembrane proteins (CcmB).

The protein resides in the cell inner membrane. The enzyme catalyses heme b(in) + ATP + H2O = heme b(out) + ADP + phosphate + H(+). Part of the ABC transporter complex CcmAB involved in the biogenesis of c-type cytochromes; once thought to export heme, this seems not to be the case, but its exact role is uncertain. Responsible for energy coupling to the transport system. The chain is Cytochrome c biogenesis ATP-binding export protein CcmA 1 from Cupriavidus metallidurans (strain ATCC 43123 / DSM 2839 / NBRC 102507 / CH34) (Ralstonia metallidurans).